A 347-amino-acid chain; its full sequence is Anthranilate phosphoribosyltransferase (347 aa).

5-phospho-alpha-D-ribose 1-diphosphate-binding positions include G88, 91 to 92, T96, 98 to 101, 116 to 124, and S128; these read GD, NIST, and KHGNRSVSS. G88 is an anthranilate binding site. S100 lines the Mg(2+) pocket. N119 is a binding site for anthranilate. R174 is a binding site for anthranilate. Residues D232 and E233 each coordinate Mg(2+).

Belongs to the anthranilate phosphoribosyltransferase family. Homodimer. Mg(2+) serves as cofactor.

The enzyme catalyses N-(5-phospho-beta-D-ribosyl)anthranilate + diphosphate = 5-phospho-alpha-D-ribose 1-diphosphate + anthranilate. The protein operates within amino-acid biosynthesis; L-tryptophan biosynthesis; L-tryptophan from chorismate: step 2/5. Catalyzes the transfer of the phosphoribosyl group of 5-phosphorylribose-1-pyrophosphate (PRPP) to anthranilate to yield N-(5'-phosphoribosyl)-anthranilate (PRA). The sequence is that of Anthranilate phosphoribosyltransferase from Shewanella sp. (strain MR-7).